A 188-amino-acid chain; its full sequence is Acireductone dioxygenase (188 aa).

Residues histidine 97, histidine 99, glutamate 103, and histidine 141 each contribute to the Fe(2+) site. Positions 97, 99, 103, and 141 each coordinate Ni(2+).

It belongs to the acireductone dioxygenase (ARD) family. As to quaternary structure, monomer. The cofactor is Fe(2+). Requires Ni(2+) as cofactor.

It carries out the reaction 1,2-dihydroxy-5-(methylsulfanyl)pent-1-en-3-one + O2 = 3-(methylsulfanyl)propanoate + CO + formate + 2 H(+). It catalyses the reaction 1,2-dihydroxy-5-(methylsulfanyl)pent-1-en-3-one + O2 = 4-methylsulfanyl-2-oxobutanoate + formate + 2 H(+). It participates in amino-acid biosynthesis; L-methionine biosynthesis via salvage pathway; L-methionine from S-methyl-5-thio-alpha-D-ribose 1-phosphate: step 5/6. Its function is as follows. Catalyzes 2 different reactions between oxygen and the acireductone 1,2-dihydroxy-3-keto-5-methylthiopentene (DHK-MTPene) depending upon the metal bound in the active site. Fe-containing acireductone dioxygenase (Fe-ARD) produces formate and 2-keto-4-methylthiobutyrate (KMTB), the alpha-ketoacid precursor of methionine in the methionine recycle pathway. Ni-containing acireductone dioxygenase (Ni-ARD) produces methylthiopropionate, carbon monoxide and formate, and does not lie on the methionine recycle pathway. The chain is Acireductone dioxygenase from Xylella fastidiosa (strain M12).